The primary structure comprises 294 residues: 4-hydroxy-tetrahydrodipicolinate synthase (294 aa).

Residue threonine 45 participates in pyruvate binding. The active-site Proton donor/acceptor is the tyrosine 133. Lysine 162 serves as the catalytic Schiff-base intermediate with substrate. A pyruvate-binding site is contributed by isoleucine 204.

Belongs to the DapA family. Homotetramer; dimer of dimers.

It is found in the cytoplasm. The catalysed reaction is L-aspartate 4-semialdehyde + pyruvate = (2S,4S)-4-hydroxy-2,3,4,5-tetrahydrodipicolinate + H2O + H(+). The protein operates within amino-acid biosynthesis; L-lysine biosynthesis via DAP pathway; (S)-tetrahydrodipicolinate from L-aspartate: step 3/4. With respect to regulation, is allosterically regulated by the feedback inhibitor (S)-lysine. In terms of biological role, catalyzes the condensation of (S)-aspartate-beta-semialdehyde [(S)-ASA] and pyruvate to 4-hydroxy-tetrahydrodipicolinate (HTPA). The sequence is that of 4-hydroxy-tetrahydrodipicolinate synthase from Agrobacterium fabrum (strain C58 / ATCC 33970) (Agrobacterium tumefaciens (strain C58)).